The primary structure comprises 78 residues: NAD(P)H-quinone oxidoreductase subunit O (78 aa).

Belongs to the complex I NdhO subunit family. As to quaternary structure, NDH-1 can be composed of about 15 different subunits; different subcomplexes with different compositions have been identified which probably have different functions.

It is found in the cellular thylakoid membrane. The enzyme catalyses a plastoquinone + NADH + (n+1) H(+)(in) = a plastoquinol + NAD(+) + n H(+)(out). It carries out the reaction a plastoquinone + NADPH + (n+1) H(+)(in) = a plastoquinol + NADP(+) + n H(+)(out). In terms of biological role, NDH-1 shuttles electrons from an unknown electron donor, via FMN and iron-sulfur (Fe-S) centers, to quinones in the respiratory and/or the photosynthetic chain. The immediate electron acceptor for the enzyme in this species is believed to be plastoquinone. Couples the redox reaction to proton translocation, and thus conserves the redox energy in a proton gradient. Cyanobacterial NDH-1 also plays a role in inorganic carbon-concentration. This Prochlorococcus marinus (strain AS9601) protein is NAD(P)H-quinone oxidoreductase subunit O.